A 504-amino-acid polypeptide reads, in one-letter code: Maturase K (504 aa).

It belongs to the intron maturase 2 family. MatK subfamily.

The protein localises to the plastid. It is found in the chloroplast. Its function is as follows. Usually encoded in the trnK tRNA gene intron. Probably assists in splicing its own and other chloroplast group II introns. The protein is Maturase K of Lupinus argenteus (Silvery lupine).